The sequence spans 230 residues: Sugar fermentation stimulation protein homolog (230 aa).

This sequence belongs to the SfsA family.

The protein is Sugar fermentation stimulation protein homolog of Clostridium botulinum (strain ATCC 19397 / Type A).